Here is a 442-residue protein sequence, read N- to C-terminus: Xaa-Pro dipeptidase (442 aa).

Residues D245, D256, H338, E383, and E422 each contribute to the Mn(2+) site.

Belongs to the peptidase M24B family. Bacterial-type prolidase subfamily. Requires Mn(2+) as cofactor.

It carries out the reaction Xaa-L-Pro dipeptide + H2O = an L-alpha-amino acid + L-proline. In terms of biological role, splits dipeptides with a prolyl residue in the C-terminal position. The polypeptide is Xaa-Pro dipeptidase (Sodalis glossinidius (strain morsitans)).